Reading from the N-terminus, the 152-residue chain is Small ribosomal subunit protein uS15 (152 aa).

A compositionally biased stretch (basic residues) spans 1–10; the sequence is MARMYARRRG. A disordered region spans residues 1–24; sequence MARMYARRRGTSSSVRPYRKEAPE.

It belongs to the universal ribosomal protein uS15 family. As to quaternary structure, part of the 30S ribosomal subunit.

The protein is Small ribosomal subunit protein uS15 of Methanoculleus marisnigri (strain ATCC 35101 / DSM 1498 / JR1).